We begin with the raw amino-acid sequence, 397 residues long: Chorismate synthase (397 aa).

Residues R40 and R46 each coordinate NADP(+). FMN is bound by residues 129-131, 257-258, G302, 317-321, and R343; these read RSS, QA, and KPISS.

The protein belongs to the chorismate synthase family. Homotetramer. It depends on FMNH2 as a cofactor.

It carries out the reaction 5-O-(1-carboxyvinyl)-3-phosphoshikimate = chorismate + phosphate. Its pathway is metabolic intermediate biosynthesis; chorismate biosynthesis; chorismate from D-erythrose 4-phosphate and phosphoenolpyruvate: step 7/7. Catalyzes the anti-1,4-elimination of the C-3 phosphate and the C-6 proR hydrogen from 5-enolpyruvylshikimate-3-phosphate (EPSP) to yield chorismate, which is the branch point compound that serves as the starting substrate for the three terminal pathways of aromatic amino acid biosynthesis. This reaction introduces a second double bond into the aromatic ring system. This chain is Chorismate synthase, found in Pelodictyon phaeoclathratiforme (strain DSM 5477 / BU-1).